The sequence spans 234 residues: Aspartate/glutamate leucyltransferase (234 aa).

Belongs to the R-transferase family. Bpt subfamily.

The protein resides in the cytoplasm. The catalysed reaction is N-terminal L-glutamyl-[protein] + L-leucyl-tRNA(Leu) = N-terminal L-leucyl-L-glutamyl-[protein] + tRNA(Leu) + H(+). It carries out the reaction N-terminal L-aspartyl-[protein] + L-leucyl-tRNA(Leu) = N-terminal L-leucyl-L-aspartyl-[protein] + tRNA(Leu) + H(+). Functionally, functions in the N-end rule pathway of protein degradation where it conjugates Leu from its aminoacyl-tRNA to the N-termini of proteins containing an N-terminal aspartate or glutamate. The sequence is that of Aspartate/glutamate leucyltransferase from Hahella chejuensis (strain KCTC 2396).